Consider the following 409-residue polypeptide: Peptidase T (409 aa).

Residue His78 coordinates Zn(2+). The active site involves Asp80. Asp140 lines the Zn(2+) pocket. Glu173 serves as the catalytic Proton acceptor. Residues Glu174, Asp196, and His379 each contribute to the Zn(2+) site.

The protein belongs to the peptidase M20B family. Requires Zn(2+) as cofactor.

Its subcellular location is the cytoplasm. The catalysed reaction is Release of the N-terminal residue from a tripeptide.. Functionally, cleaves the N-terminal amino acid of tripeptides. This is Peptidase T from Salmonella enteritidis PT4 (strain P125109).